A 259-amino-acid chain; its full sequence is Hydroxyacylglutathione hydrolase (259 aa).

Residues H56, H58, D60, H61, H112, D133, and H171 each contribute to the Zn(2+) site.

This sequence belongs to the metallo-beta-lactamase superfamily. Glyoxalase II family. As to quaternary structure, monomer. Requires Zn(2+) as cofactor.

It catalyses the reaction an S-(2-hydroxyacyl)glutathione + H2O = a 2-hydroxy carboxylate + glutathione + H(+). It functions in the pathway secondary metabolite metabolism; methylglyoxal degradation; (R)-lactate from methylglyoxal: step 2/2. Functionally, thiolesterase that catalyzes the hydrolysis of S-D-lactoyl-glutathione to form glutathione and D-lactic acid. The sequence is that of Hydroxyacylglutathione hydrolase from Pseudomonas putida (strain W619).